The sequence spans 89 residues: Small ribosomal subunit protein uS15 (89 aa).

Belongs to the universal ribosomal protein uS15 family. Part of the 30S ribosomal subunit. Forms a bridge to the 50S subunit in the 70S ribosome, contacting the 23S rRNA.

Functionally, one of the primary rRNA binding proteins, it binds directly to 16S rRNA where it helps nucleate assembly of the platform of the 30S subunit by binding and bridging several RNA helices of the 16S rRNA. Forms an intersubunit bridge (bridge B4) with the 23S rRNA of the 50S subunit in the ribosome. This Pseudomonas fluorescens (strain Pf0-1) protein is Small ribosomal subunit protein uS15.